Here is a 136-residue protein sequence, read N- to C-terminus: Small ribosomal subunit protein uS11c (136 aa).

This sequence belongs to the universal ribosomal protein uS11 family. In terms of assembly, part of the 30S ribosomal subunit.

The protein resides in the plastid. The protein localises to the chloroplast. This is Small ribosomal subunit protein uS11c from Guizotia abyssinica (Niger).